Here is a 366-residue protein sequence, read N- to C-terminus: Glutathione S-transferase omega-like 3 (366 aa).

Cys46 is an active-site residue. A GST C-terminal domain is found at Pro197 to Val349.

Belongs to the GST superfamily. Omega family.

Its subcellular location is the cytoplasm. The catalysed reaction is RX + glutathione = an S-substituted glutathione + a halide anion + H(+). In terms of biological role, active as '1-Cys' thiol transferase against beta-hydroxyethyl disulfide (HED), as dehydroascorbate reductase and as dimethylarsinic acid reductase, while not active against the standard GST substrate 1-chloro-2,4-dinitrobenzene (CDNB). The polypeptide is Glutathione S-transferase omega-like 3 (GTO3) (Saccharomyces cerevisiae (strain ATCC 204508 / S288c) (Baker's yeast)).